A 495-amino-acid polypeptide reads, in one-letter code: Cobyric acid synthase (495 aa).

Residues 249 to 442 (KFIVKVPVVT…LHGVFDEPEA (194 aa)) form the GATase cobBQ-type domain. Catalysis depends on Cys-330, which acts as the Nucleophile. His-434 is a catalytic residue.

The protein belongs to the CobB/CobQ family. CobQ subfamily.

It participates in cofactor biosynthesis; adenosylcobalamin biosynthesis. Catalyzes amidations at positions B, D, E, and G on adenosylcobyrinic A,C-diamide. NH(2) groups are provided by glutamine, and one molecule of ATP is hydrogenolyzed for each amidation. The chain is Cobyric acid synthase from Aliivibrio fischeri (strain ATCC 700601 / ES114) (Vibrio fischeri).